Reading from the N-terminus, the 212-residue chain is ATP phosphoribosyltransferase (212 aa).

This sequence belongs to the ATP phosphoribosyltransferase family. Short subfamily. Heteromultimer composed of HisG and HisZ subunits.

The protein resides in the cytoplasm. The catalysed reaction is 1-(5-phospho-beta-D-ribosyl)-ATP + diphosphate = 5-phospho-alpha-D-ribose 1-diphosphate + ATP. Its pathway is amino-acid biosynthesis; L-histidine biosynthesis; L-histidine from 5-phospho-alpha-D-ribose 1-diphosphate: step 1/9. In terms of biological role, catalyzes the condensation of ATP and 5-phosphoribose 1-diphosphate to form N'-(5'-phosphoribosyl)-ATP (PR-ATP). Has a crucial role in the pathway because the rate of histidine biosynthesis seems to be controlled primarily by regulation of HisG enzymatic activity. This is ATP phosphoribosyltransferase from Prochlorococcus marinus (strain AS9601).